The following is a 1396-amino-acid chain: MRPLLDEAKRRVDRRLSASRQSLSTSRIFPSALPERLKDDHDAQVDYTAPPGGGGTKEGHFQYMQQSIFGMIAAVGSQSDFHARFDDSSDSERDTDRPPQKRTEKESQATDAPPSSKNEKKALRSPQRPKSPSQERGRRHRKTLSGSRILRPLMPGSSQRQGGAQTEPSTGNQMSRVPSPERPRSTTPRAAPVLSRMVEAQALFDSKGSMNQSPRSPPAETQEEQSQEQTSASPLSLRLMEMFGFESPEKVLVEYACSLVQSMLLQGYMYVTEGHICFYAYLPRKSTVAIKSGYLYKRGRKNPKYNRYWFSLKGDVLSYYADPSNLYFPSGHIDLRYGISASLSEPKEKDREARDFQVTTDQRTYYFRADSSTSAKEWVKSLQKVIFRTHNDGDSVKISFPIESIIDIEESPMVDFAETFKIRAIESGETYAIDEYYFSFFNDGQDAFNFVKGLVSESQAKNPSRESPQPGRTTPQSRARGSRARWSLTSGLSQVLGSSDARRRRSASASQFSPGRDAAGLSPTSRQRDLSESFVNSFDQATESSTVLQSMTDTAESASQILNRSDVFQYPAMQPFRRQSLSEDQFGRRHSDETARSTNDIARLGPGITPRDVQRFYPPSDSDHDAQDAARVQQSASSLNELVRAGAYPLQRAAGLAEYLRNRSKQMGTLLASESMGYIEKVSGMWAGGRRHYGEAEGILPDDQDVDPEDKEDGCNHGDRFRAHFALPPTEKLQATYFAYLHRVLPLYGKIYVSQKKLCFRSLLPGTRTKMILPLKDVENVEKEKGFRFGYHGLVVIIRGHEELFFEFNAADVRDDCAVTIHQHLESVRFLSESGMLAEQEQDESEAAKAEHRMLQEARKDASGGLIPQTPSDESPEIHPIFDDPRASIINFKPTESLRITCLTIGSRGDVQPYIALCKGLLAEGHRPKIATHAEFEPWIRKHGIDFAPVEGDPAELMRICVENGMFTYSFLKEASMKFRGWIDDLLSSAWRSCQDSDLLIESPSAMAGIHIAEALRIPYFRAFTMPWTRTRAYPHAFAVPEHKMGGAYNYITYVMFDNVFWKAIAGQVNRWRQSELGLKATNLDKMQPNKVPFLYNYSPSVVVPPLDYPDWIRITGYWFLSEASDWTPPADLMAFIQRARDDGKKLVYIGFGSIVVSDPSALTRTVVESVQKADVRCILSKGWSDRLGDPASVKSEIPLPPEIFQIQAAPHDWLFSQIDAAAHHGGAGTTGASLRAGVPTIVKPFFGDQFFFGTRVEDLGVGICLKRLNVSLFSRALWEATHSERMIVKARNLGQQIRSEDGVATAIQAIYRDLEYAKTLARQRSIVSSTPFSPTPSAKTVAEQEVDDDVTDSEEWTFIGDETDIDISRRVRGRAVSDVDMLPEPLAVRSPELAQ.

Over residues 1-16 (MRPLLDEAKRRVDRRL) the composition is skewed to basic and acidic residues. Disordered regions lie at residues 1-59 (MRPL…TKEG), 82-193 (HARF…AAPV), and 206-233 (SKGSMNQSPRSPPAETQEEQSQEQTSAS). The segment covering 18-28 (ASRQSLSTSRI) has biased composition (polar residues). Composition is skewed to basic and acidic residues over residues 35-44 (ERLKDDHDAQ) and 82-108 (HARFDDSSDSERDTDRPPQKRTEKESQ). Over residues 156–175 (GSSQRQGGAQTEPSTGNQMS) the composition is skewed to polar residues. A GRAM 1 domain is found at 237-288 (LRLMEMFGFESPEKVLVEYACSLVQSMLLQGYMYVTEGHICFYAYLPRKSTV). Residues 289–387 (AIKSGYLYKR…WVKSLQKVIF (99 aa)) enclose the PH domain. Composition is skewed to polar residues over residues 459–479 (QAKNPSRESPQPGRTTPQSRA) and 487–497 (SLTSGLSQVLG). Disordered regions lie at residues 459-531 (QAKN…RDLS) and 576-635 (FRRQ…VQQS). The segment covering 585–595 (QFGRRHSDETA) has biased composition (basic and acidic residues). The GRAM 2 domain occupies 719 to 785 (DRFRAHFALP…KDVENVEKEK (67 aa)). The interval 841–880 (EQDESEAAKAEHRMLQEARKDASGGLIPQTPSDESPEIHP) is disordered. A compositionally biased stretch (basic and acidic residues) spans 846-862 (EAAKAEHRMLQEARKDA). Residues Ser-907, Arg-908, Asp-910, Ala-1210, His-1212, His-1225, Gly-1229, Thr-1230, Asp-1249, and Gln-1250 each contribute to the UDP-alpha-D-glucose site.

It belongs to the glycosyltransferase 28 family.

Its subcellular location is the cytoplasm. The protein localises to the preautophagosomal structure membrane. It catalyses the reaction a sterol + UDP-alpha-D-glucose = a sterol 3-beta-D-glucoside + UDP + H(+). The enzyme catalyses ergosterol + UDP-alpha-D-glucose = ergosteryl 3-beta-D-glucoside + UDP + H(+). Its function is as follows. Sterol glycosyltransferase responsible for the glycosylation of ergosterol to form ergosterol-glucoside. This is Sterol 3-beta-glucosyltransferase from Aspergillus terreus (strain NIH 2624 / FGSC A1156).